We begin with the raw amino-acid sequence, 792 residues long: Chloride channel protein CLC-d (792 aa).

The next 12 membrane-spanning stretches (helical) occupy residues 78–98, 119–139, 170–190, 195–215, 237–257, 267–287, 320–340, 361–381, 451–471, 474–494, 508–528, and 529–549; these read FFSLLIGIGTGLAAVFINLSV, AGFIVYLLINLVLVFSSAYII, RTLIGKIFGSIGSVGGGLALG, LVHTGACIASLLGQGGSTKYH, GCAAGVAAAFRAPVGGVLFAL, QLMWRVFFTSAIVAVVVRTAM, LLPMAVIGVIGGLLGALFNQL, IIEACIISCITSAISFGLPLL, LLTFLAMFYTLAVVTFGTAVP, QFVPGIMIGSTYGRLVGMFVV, ALLGAASFLGGSMRMTVSLCV, and IMVEITNNLKLLPLIMLVLLI. 2 consecutive CBS domains span residues 592–652 and 704–761; these read QSQK…KVDF and LNPS…SSAV. The helical transmembrane segment at 731–751 threads the bilayer; that stretch reads HLFVVPRPSRVIGLITRKDLL.

It belongs to the chloride channel (TC 2.A.49) family. As to quaternary structure, homodimer. As to expression, broadly expressed in the plant, but predominantly in the silique.

It localises to the membrane. In terms of biological role, voltage-gated chloride channel. This Arabidopsis thaliana (Mouse-ear cress) protein is Chloride channel protein CLC-d (CLC-D).